Here is a 763-residue protein sequence, read N- to C-terminus: Phosphoglycerol transferase I (763 aa).

A run of 4 helical transmembrane segments spans residues 1 to 21 (MSELLSFALFLASVLIYAWKA), 26 to 46 (WWFAATLTVLGLFVVLNITLF), 77 to 97 (ILPGIGIVLGLTAVFGALGWI), and 108 to 128 (FGYSLLALLLALGSVDASPAF).

Belongs to the OpgB family.

The protein resides in the cell inner membrane. It carries out the reaction a phosphatidylglycerol + a membrane-derived-oligosaccharide D-glucose = a 1,2-diacyl-sn-glycerol + a membrane-derived-oligosaccharide 6-(glycerophospho)-D-glucose.. It participates in glycan metabolism; osmoregulated periplasmic glucan (OPG) biosynthesis. Functionally, transfers a phosphoglycerol residue from phosphatidylglycerol to the membrane-bound nascent glucan backbones. This is Phosphoglycerol transferase I from Escherichia coli (strain SMS-3-5 / SECEC).